The chain runs to 511 residues: Putative thymidine phosphorylase 1 (511 aa).

It belongs to the thymidine/pyrimidine-nucleoside phosphorylase family. Type 2 subfamily.

It catalyses the reaction thymidine + phosphate = 2-deoxy-alpha-D-ribose 1-phosphate + thymine. The polypeptide is Putative thymidine phosphorylase 1 (Acidovorax sp. (strain JS42)).